The chain runs to 286 residues: 4-hydroxy-tetrahydrodipicolinate synthase (286 aa).

Pyruvate is bound at residue threonine 42. The Proton donor/acceptor role is filled by tyrosine 129. The Schiff-base intermediate with substrate role is filled by lysine 157. Valine 196 contributes to the pyruvate binding site.

It belongs to the DapA family. In terms of assembly, homotetramer; dimer of dimers.

The protein localises to the cytoplasm. It carries out the reaction L-aspartate 4-semialdehyde + pyruvate = (2S,4S)-4-hydroxy-2,3,4,5-tetrahydrodipicolinate + H2O + H(+). It functions in the pathway amino-acid biosynthesis; L-lysine biosynthesis via DAP pathway; (S)-tetrahydrodipicolinate from L-aspartate: step 3/4. Catalyzes the condensation of (S)-aspartate-beta-semialdehyde [(S)-ASA] and pyruvate to 4-hydroxy-tetrahydrodipicolinate (HTPA). This chain is 4-hydroxy-tetrahydrodipicolinate synthase, found in Chlamydia muridarum (strain MoPn / Nigg).